The sequence spans 236 residues: 5'-methylthioadenosine/S-adenosylhomocysteine nucleosidase (236 aa).

Glu-12 functions as the Proton acceptor in the catalytic mechanism. Substrate-binding positions include Gly-78, Ile-153, and Met-174 to Glu-175. The active-site Proton donor is Asp-198.

The protein belongs to the PNP/UDP phosphorylase family. MtnN subfamily.

The enzyme catalyses S-adenosyl-L-homocysteine + H2O = S-(5-deoxy-D-ribos-5-yl)-L-homocysteine + adenine. It catalyses the reaction S-methyl-5'-thioadenosine + H2O = 5-(methylsulfanyl)-D-ribose + adenine. It carries out the reaction 5'-deoxyadenosine + H2O = 5-deoxy-D-ribose + adenine. The protein operates within amino-acid biosynthesis; L-methionine biosynthesis via salvage pathway; S-methyl-5-thio-alpha-D-ribose 1-phosphate from S-methyl-5'-thioadenosine (hydrolase route): step 1/2. In terms of biological role, catalyzes the irreversible cleavage of the glycosidic bond in both 5'-methylthioadenosine (MTA) and S-adenosylhomocysteine (SAH/AdoHcy) to adenine and the corresponding thioribose, 5'-methylthioribose and S-ribosylhomocysteine, respectively. Also cleaves 5'-deoxyadenosine, a toxic by-product of radical S-adenosylmethionine (SAM) enzymes, into 5-deoxyribose and adenine. This Shewanella baltica (strain OS223) protein is 5'-methylthioadenosine/S-adenosylhomocysteine nucleosidase.